Here is a 207-residue protein sequence, read N- to C-terminus: Large ribosomal subunit protein bL25 (207 aa).

A disordered region spans residues 182–207 (QDLGDESVQEEQAAESAEGESEGSED).

Belongs to the bacterial ribosomal protein bL25 family. CTC subfamily. As to quaternary structure, part of the 50S ribosomal subunit; part of the 5S rRNA/L5/L18/L25 subcomplex. Contacts the 5S rRNA. Binds to the 5S rRNA independently of L5 and L18.

Its function is as follows. This is one of the proteins that binds to the 5S RNA in the ribosome where it forms part of the central protuberance. The polypeptide is Large ribosomal subunit protein bL25 (Micrococcus luteus (strain ATCC 4698 / DSM 20030 / JCM 1464 / CCM 169 / CCUG 5858 / IAM 1056 / NBRC 3333 / NCIMB 9278 / NCTC 2665 / VKM Ac-2230) (Micrococcus lysodeikticus)).